The following is a 302-amino-acid chain: uncharacterized protein (302 aa).

Transmembrane regions (helical) follow at residues 1 to 21 (MSWIIFYTIIFALLVLDLGVI), 33 to 53 (SLLFSLFYFTISCLFGIYIYY), 67 to 87 (FLIEKAMSLDNIFVISIIFQF), 101 to 121 (FGIIGVIAFRAVMIYGGIILI), 124 to 144 (FSWLLYIFAVILIATGVKTFY), 185 to 205 (YVTPLFISLILIEAIDLVFAI), 220 to 240 (IIYTSNIFAILGLRALFFCLA), 253 to 273 (LALILIFIGIKIFIHHYIAIP), and 274 to 294 (AYISLTVTITLLLLGIFASVI).

It belongs to the TerC family.

Its subcellular location is the cell membrane. This is an uncharacterized protein from Rickettsia bellii (strain RML369-C).